Reading from the N-terminus, the 230-residue chain is Ribosomal RNA small subunit methyltransferase G (230 aa).

S-adenosyl-L-methionine is bound by residues G91, L96, 142–143 (VE), and R161.

This sequence belongs to the methyltransferase superfamily. RNA methyltransferase RsmG family.

The protein resides in the cytoplasm. The enzyme catalyses guanosine(527) in 16S rRNA + S-adenosyl-L-methionine = N(7)-methylguanosine(527) in 16S rRNA + S-adenosyl-L-homocysteine. In terms of biological role, specifically methylates the N7 position of guanine in position 527 of 16S rRNA. The polypeptide is Ribosomal RNA small subunit methyltransferase G (Burkholderia pseudomallei (strain K96243)).